The sequence spans 64 residues: Conotoxin VnMLCL-042 (64 aa).

Residues 1 to 19 (MLCLPVFIILLLLASPAAP) form the signal peptide. A propeptide spanning residues 20–43 (NPLQTRIQSNLIRAGPEDANMKTD) is cleaved from the precursor. Met63 carries the post-translational modification Methionine amide.

It belongs to the conotoxin T superfamily. Expressed by the venom duct.

The protein resides in the secreted. This chain is Conotoxin VnMLCL-042, found in Conus ventricosus (Mediterranean cone).